A 274-amino-acid chain; its full sequence is Ciliary microtubule inner protein 2B (274 aa).

Disordered stretches follow at residues 46–89 and 119–171; these read SPGL…SSMV and TQRN…MDDR. A compositionally biased stretch (basic and acidic residues) spans 130–155; sequence LPKEAKGEKDVEKDQEPKPEVEKEPE.

It belongs to the CIMIP2 family. In terms of assembly, microtubule inner protein component of sperm flagellar doublet microtubules. As to expression, expressed in trachea multiciliated cells.

It is found in the cytoplasm. It localises to the cytoskeleton. The protein resides in the cilium axoneme. Its subcellular location is the flagellum axoneme. Its function is as follows. Microtubule inner protein (MIP) part of the dynein-decorated doublet microtubules (DMTs) in cilia axoneme, which is required for motile cilia beating. This Bos taurus (Bovine) protein is Ciliary microtubule inner protein 2B (CIMIP2B).